We begin with the raw amino-acid sequence, 246 residues long: NADH-quinone oxidoreductase subunit C (246 aa).

The protein belongs to the complex I 30 kDa subunit family. In terms of assembly, NDH-1 is composed of 14 different subunits. Subunits NuoB, C, D, E, F, and G constitute the peripheral sector of the complex.

Its subcellular location is the cell inner membrane. It catalyses the reaction a quinone + NADH + 5 H(+)(in) = a quinol + NAD(+) + 4 H(+)(out). Its function is as follows. NDH-1 shuttles electrons from NADH, via FMN and iron-sulfur (Fe-S) centers, to quinones in the respiratory chain. The immediate electron acceptor for the enzyme in this species is believed to be ubiquinone. Couples the redox reaction to proton translocation (for every two electrons transferred, four hydrogen ions are translocated across the cytoplasmic membrane), and thus conserves the redox energy in a proton gradient. The protein is NADH-quinone oxidoreductase subunit C of Halorhodospira halophila (strain DSM 244 / SL1) (Ectothiorhodospira halophila (strain DSM 244 / SL1)).